A 282-amino-acid chain; its full sequence is E3 ubiquitin-protein ligase SIAH1B (282 aa).

The span at methionine 1–proline 17 shows a compositional bias: polar residues. Residues methionine 1–proline 23 form a disordered region. The residue at position 19 (serine 19) is a Phosphoserine; by ATM and ATR. The segment at cysteine 41–arginine 76 adopts an RING-type zinc-finger fold. The segment at valine 90–cysteine 282 is SBD. The segment at serine 93–lysine 153 adopts an SIAH-type zinc-finger fold. Zn(2+) contacts are provided by cysteine 98, cysteine 105, histidine 117, cysteine 121, cysteine 128, cysteine 135, histidine 147, and histidine 152.

The protein belongs to the SINA (Seven in absentia) family. As to quaternary structure, homodimer. Post-translationally, phosphorylated on Ser-19 by ATM and ATR. As to expression, widely expressed at low level in embryos and adults. Due to the high similarity between SIAH1A and SIAH1B, it is difficult to distinguish its own tissue specificity. Overexpressed in endothelial cells of adult lung.

The protein localises to the cytoplasm. Its subcellular location is the nucleus. The enzyme catalyses S-ubiquitinyl-[E2 ubiquitin-conjugating enzyme]-L-cysteine + [acceptor protein]-L-lysine = [E2 ubiquitin-conjugating enzyme]-L-cysteine + N(6)-ubiquitinyl-[acceptor protein]-L-lysine.. Its pathway is protein modification; protein ubiquitination. Its function is as follows. E3 ubiquitin-protein ligase that mediates ubiquitination and subsequent proteasomal degradation of target proteins. E3 ubiquitin ligases accept ubiquitin from an E2 ubiquitin-conjugating enzyme in the form of a thioester and then directly transfers the ubiquitin to targeted substrates. Mediates E3 ubiquitin ligase activity either through direct binding to substrates or by functioning as the essential RING domain subunit of larger E3 complexes. In Mus musculus (Mouse), this protein is E3 ubiquitin-protein ligase SIAH1B (Siah1b).